The chain runs to 383 residues: Succinate--CoA ligase [ADP-forming] subunit beta 2 (383 aa).

In terms of domain architecture, ATP-grasp spans 9-231; sequence RELFKEHGIV…QEDADSLEAR (223 aa). ATP-binding positions include K45, 52 to 54, C94, and E99; that span reads GRG. The Mg(2+) site is built by N187 and D201. Residues N251 and 308–310 contribute to the substrate site; that span reads GIT.

Belongs to the succinate/malate CoA ligase beta subunit family. In terms of assembly, heterotetramer of two alpha and two beta subunits. Mg(2+) serves as cofactor.

The catalysed reaction is succinate + ATP + CoA = succinyl-CoA + ADP + phosphate. It carries out the reaction GTP + succinate + CoA = succinyl-CoA + GDP + phosphate. It participates in carbohydrate metabolism; tricarboxylic acid cycle; succinate from succinyl-CoA (ligase route): step 1/1. Succinyl-CoA synthetase functions in the citric acid cycle (TCA), coupling the hydrolysis of succinyl-CoA to the synthesis of either ATP or GTP and thus represents the only step of substrate-level phosphorylation in the TCA. The beta subunit provides nucleotide specificity of the enzyme and binds the substrate succinate, while the binding sites for coenzyme A and phosphate are found in the alpha subunit. This chain is Succinate--CoA ligase [ADP-forming] subunit beta 2, found in Streptomyces coelicolor (strain ATCC BAA-471 / A3(2) / M145).